The primary structure comprises 734 residues: Rho GTPase-activating protein gacL (734 aa).

The Rho-GAP domain occupies 141 to 339 (ISLDTLIAKE…QMILHYDTLF (199 aa)). 3 WD repeats span residues 381–430 (GHNK…FIKE), 539–579 (LFMK…TIHQ), and 585–623 (KRPK…LEHK).

The protein resides in the cytoplasm. Its function is as follows. Rho GTPase-activating protein involved in the signal transduction pathway. The polypeptide is Rho GTPase-activating protein gacL (gacL) (Dictyostelium discoideum (Social amoeba)).